A 303-amino-acid chain; its full sequence is Geranylgeranyl pyrophosphate synthase (303 aa).

Lysine 30, arginine 33, and histidine 62 together coordinate isopentenyl diphosphate. Mg(2+) contacts are provided by aspartate 69 and aspartate 73. Arginine 78 serves as a coordination point for dimethylallyl diphosphate. Arginine 79 is a binding site for isopentenyl diphosphate. Positions 156, 157, 190, 207, and 217 each coordinate dimethylallyl diphosphate.

The protein belongs to the FPP/GGPP synthase family. Mg(2+) is required as a cofactor.

The protein resides in the cytoplasm. The enzyme catalyses isopentenyl diphosphate + dimethylallyl diphosphate = (2E)-geranyl diphosphate + diphosphate. The catalysed reaction is isopentenyl diphosphate + (2E)-geranyl diphosphate = (2E,6E)-farnesyl diphosphate + diphosphate. It catalyses the reaction isopentenyl diphosphate + (2E,6E)-farnesyl diphosphate = (2E,6E,10E)-geranylgeranyl diphosphate + diphosphate. It functions in the pathway isoprenoid biosynthesis; farnesyl diphosphate biosynthesis; farnesyl diphosphate from geranyl diphosphate and isopentenyl diphosphate: step 1/1. It participates in isoprenoid biosynthesis; geranyl diphosphate biosynthesis; geranyl diphosphate from dimethylallyl diphosphate and isopentenyl diphosphate: step 1/1. The protein operates within isoprenoid biosynthesis; geranylgeranyl diphosphate biosynthesis; geranylgeranyl diphosphate from farnesyl diphosphate and isopentenyl diphosphate: step 1/1. Its function is as follows. Catalyzes the trans-addition of the three molecules of IPP onto DMAPP to form geranylgeranyl pyrophosphate. This is Geranylgeranyl pyrophosphate synthase from Mucor circinelloides f. lusitanicus (Mucor racemosus var. lusitanicus).